The sequence spans 355 residues: Uroporphyrinogen decarboxylase (355 aa).

Substrate is bound by residues R36–R40, D85, Y160, S215, and H334.

Belongs to the uroporphyrinogen decarboxylase family. In terms of assembly, homodimer.

It localises to the cytoplasm. It catalyses the reaction uroporphyrinogen III + 4 H(+) = coproporphyrinogen III + 4 CO2. Its pathway is porphyrin-containing compound metabolism; protoporphyrin-IX biosynthesis; coproporphyrinogen-III from 5-aminolevulinate: step 4/4. Catalyzes the decarboxylation of four acetate groups of uroporphyrinogen-III to yield coproporphyrinogen-III. The sequence is that of Uroporphyrinogen decarboxylase from Rhodococcus jostii (strain RHA1).